Reading from the N-terminus, the 128-residue chain is UPF0102 protein Acry_2261 (128 aa).

This sequence belongs to the UPF0102 family.

The protein is UPF0102 protein Acry_2261 of Acidiphilium cryptum (strain JF-5).